Reading from the N-terminus, the 336-residue chain is Cell division protein ZipA (336 aa).

Residues 1–2 (ME) are Periplasmic-facing. A helical membrane pass occupies residues 3–23 (LHILFFILAGLLIAVLISFSL). Residues 24-336 (WSARREKSRI…SRQSYLARVS (313 aa)) lie on the Cytoplasmic side of the membrane. Positions 56 to 77 (PSLNPQSYAQTTGQHGETEADN) are disordered. Residues 59-70 (NPQSYAQTTGQH) are compositionally biased toward polar residues.

The protein belongs to the ZipA family. In terms of assembly, interacts with FtsZ via their C-terminal domains.

The protein localises to the cell inner membrane. In terms of biological role, essential cell division protein that stabilizes the FtsZ protofilaments by cross-linking them and that serves as a cytoplasmic membrane anchor for the Z ring. Also required for the recruitment to the septal ring of downstream cell division proteins. The polypeptide is Cell division protein ZipA (Actinobacillus pleuropneumoniae serotype 3 (strain JL03)).